The sequence spans 198 residues: tRNA (pseudouridine(54)-N(1))-methyltransferase (198 aa).

S-adenosyl-L-methionine contacts are provided by residues Leu130, Gly153, 176-181 (LSPLEL), and Cys186.

The protein belongs to the methyltransferase superfamily. TrmY family. In terms of assembly, homodimer.

Its subcellular location is the cytoplasm. It catalyses the reaction pseudouridine(54) in tRNA + S-adenosyl-L-methionine = N(1)-methylpseudouridine(54) in tRNA + S-adenosyl-L-homocysteine + H(+). In terms of biological role, specifically catalyzes the N1-methylation of pseudouridine at position 54 (Psi54) in tRNAs. The protein is tRNA (pseudouridine(54)-N(1))-methyltransferase of Methanococcus maripaludis (strain C6 / ATCC BAA-1332).